A 478-amino-acid chain; its full sequence is Proline--tRNA ligase (478 aa).

The protein belongs to the class-II aminoacyl-tRNA synthetase family. ProS type 3 subfamily. As to quaternary structure, homodimer.

It localises to the cytoplasm. The enzyme catalyses tRNA(Pro) + L-proline + ATP = L-prolyl-tRNA(Pro) + AMP + diphosphate. Its function is as follows. Catalyzes the attachment of proline to tRNA(Pro) in a two-step reaction: proline is first activated by ATP to form Pro-AMP and then transferred to the acceptor end of tRNA(Pro). This Clostridium botulinum (strain Kyoto / Type A2) protein is Proline--tRNA ligase.